We begin with the raw amino-acid sequence, 614 residues long: Probable LRR receptor-like serine/threonine-protein kinase At5g63710 (614 aa).

An N-terminal signal peptide occupies residues 1 to 50 (MAHSGNGESFHDPLRGFIQRNCFRWNNQKLILQCFMALAFVGITSSTTQP). Topologically, residues 51-224 (DIEGGALLQL…VTSSKKKLRD (174 aa)) are extracellular. 4 N-linked (GlcNAc...) asparagine glycosylation sites follow: Asn-65, Asn-125, Asn-146, and Asn-175. LRR repeat units lie at residues 115–139 (LKFLVTLELQNNSLSGALPDSLGNM), 141–163 (NLQTLNLSVNSFSGSIPASWSQL), and 164–187 (SNLKHLDLSSNNLTGSIPTQFFSI). Residues 225 to 245 (ITLTASCVASIILFLGAMVMY) traverse the membrane as a helical segment. The Cytoplasmic segment spans residues 246-613 (HHHRVRRTKY…DQESIRLSTA (368 aa)). A Phosphothreonine modification is found at Thr-286. Positions 289 to 573 (FNESNLIGQG…GTGGLAEKWT (285 aa)) constitute a Protein kinase domain. 295–303 (IGQGGFGKV) provides a ligand contact to ATP. Thr-312 bears the Phosphothreonine mark. ATP is bound at residue Lys-317. Position 370 is a phosphoserine (Ser-370). A Phosphothreonine modification is found at Thr-389. Asp-416 acts as the Proton acceptor in catalysis. 3 positions are modified to phosphothreonine: Thr-449, Thr-450, and Thr-455. The residue at position 463 (Tyr-463) is a Phosphotyrosine. Position 466 is a phosphothreonine (Thr-466). Ser-470 bears the Phosphoserine mark. Phosphothreonine is present on Thr-545.

It belongs to the protein kinase superfamily. Ser/Thr protein kinase family.

It localises to the cell membrane. It catalyses the reaction L-seryl-[protein] + ATP = O-phospho-L-seryl-[protein] + ADP + H(+). The enzyme catalyses L-threonyl-[protein] + ATP = O-phospho-L-threonyl-[protein] + ADP + H(+). This Arabidopsis thaliana (Mouse-ear cress) protein is Probable LRR receptor-like serine/threonine-protein kinase At5g63710.